The primary structure comprises 148 residues: Large ribosomal subunit protein uL15 (148 aa).

The segment covering 1-10 (MQLHNLEYKK) has biased composition (basic and acidic residues). Residues 1–42 (MQLHNLEYKKGSRNHKEKRVGRGHGSGLGKTSGRGQDGQKAR) form a disordered region. The segment covering 11 to 22 (GSRNHKEKRVGR) has biased composition (basic residues). Residues 23–36 (GHGSGLGKTSGRGQ) show a composition bias toward gly residues.

This sequence belongs to the universal ribosomal protein uL15 family. In terms of assembly, part of the 50S ribosomal subunit.

In terms of biological role, binds to the 23S rRNA. This Ureaplasma parvum serovar 3 (strain ATCC 27815 / 27 / NCTC 11736) protein is Large ribosomal subunit protein uL15.